A 128-amino-acid chain; its full sequence is Leucine-rich single-pass membrane protein 1 (128 aa).

Serine 24 is modified (phosphoserine). Residues 66-86 (GLLLVLTVSLALVFFAIFLII) traverse the membrane as a helical segment. Residues 90 to 111 (NQMEDVSRRLTAEGKDIDDLKK) are a coiled coil.

It is found in the membrane. This chain is Leucine-rich single-pass membrane protein 1 (Lsmem1), found in Mus musculus (Mouse).